A 291-amino-acid polypeptide reads, in one-letter code: Small ribosomal subunit protein uS2 (291 aa).

It belongs to the universal ribosomal protein uS2 family.

In Orientia tsutsugamushi (strain Boryong) (Rickettsia tsutsugamushi), this protein is Small ribosomal subunit protein uS2.